A 476-amino-acid chain; its full sequence is Doublecortin domain-containing protein 2 (476 aa).

Doublecortin domains are found at residues 17–100 (KSVL…LNYL) and 139–221 (CTIF…LPYS). A disordered region spans residues 234–476 (FGQKASSLPP…QQNKDYAAVA (243 aa)). The segment covering 261 to 272 (STVGSSDNSSPQ) has biased composition (polar residues). Serine 270 carries the phosphoserine modification. Basic and acidic residues predominate over residues 279–289 (KKEDVNSEKLT). Polar residues predominate over residues 296-306 (KLKNSQETIPN). The span at 354 to 366 (EKANKDAEQKEDF) shows a compositional bias: basic and acidic residues. A compositionally biased stretch (low complexity) spans 415–426 (ELQQVNNELQLV). Residues 446-455 (DPQRPPRPEV) are compositionally biased toward basic and acidic residues.

Interacts with DVL1, DVL2 and DVL3. As to expression, ubiquitously expressed. In brain, highly expressed in the entorhinal cortex, inferior temporal cortex, medial temporal cortex, hypothalamus, amygdala and hippocampus. Expressed in liver by cholangiocytes, the epithelial cells of the bile ducts (at protein level).

Its subcellular location is the cell projection. The protein localises to the cilium. It localises to the cytoplasm. It is found in the cytoskeleton. The protein resides in the cilium axoneme. Its subcellular location is the kinocilium. In terms of biological role, protein that plays a role in the inhibition of canonical Wnt signaling pathway. May be involved in neuronal migration during development of the cerebral neocortex. Involved in the control of ciliogenesis and ciliary length. This is Doublecortin domain-containing protein 2 (DCDC2) from Homo sapiens (Human).